Here is a 208-residue protein sequence, read N- to C-terminus: Small ribosomal subunit protein uS4 (208 aa).

The tract at residues 30–49 (KSALEKRPYPPGQHGQRRSK) is disordered. An S4 RNA-binding domain is found at 98–161 (RRLDNVVYRM…KNNPQIQRSL (64 aa)).

The protein belongs to the universal ribosomal protein uS4 family. Part of the 30S ribosomal subunit. Contacts protein S5. The interaction surface between S4 and S5 is involved in control of translational fidelity.

One of the primary rRNA binding proteins, it binds directly to 16S rRNA where it nucleates assembly of the body of the 30S subunit. Its function is as follows. With S5 and S12 plays an important role in translational accuracy. This is Small ribosomal subunit protein uS4 from Nitratiruptor sp. (strain SB155-2).